The chain runs to 63 residues: Insect toxin TbIT-1 (63 aa).

The 62-residue stretch at 2 to 63 (KEGYPVDSRG…VYDNASNKCB (62 aa)) folds into the LCN-type CS-alpha/beta domain. 4 cysteine pairs are disulfide-bonded: C12–C62, C16–C38, C24–C43, and C28–C45.

The protein belongs to the long (4 C-C) scorpion toxin superfamily. Sodium channel inhibitor family. Beta subfamily. As to expression, expressed by the venom gland.

Its subcellular location is the secreted. Its function is as follows. Beta toxins bind voltage-independently at site-4 of sodium channels (Nav) and shift the voltage of activation toward more negative potentials thereby affecting sodium channel activation and promoting spontaneous and repetitive firing. This toxin is only active against insects. The polypeptide is Insect toxin TbIT-1 (Tityus bahiensis (Brazilian scorpion)).